The sequence spans 550 residues: Acidic amino acid decarboxylase GADL1 (550 aa).

Lysine 362 is subject to N6-(pyridoxal phosphate)lysine.

It belongs to the group II decarboxylase family. In terms of assembly, homodimer. Requires pyridoxal 5'-phosphate as cofactor. Expressed in skeletal muscles and kidney (at protein level). Expressed in skeletal muscle and weakly in brain. Not expressed in liver or kidney. Expressed in brain, olfactory bulb, liver, muscle and kidney with the highest expression in olfactory bulb and almost not detected in liver (at protein level).

It catalyses the reaction L-aspartate + H(+) = beta-alanine + CO2. It carries out the reaction 3-sulfino-L-alanine + H(+) = hypotaurine + CO2. The enzyme catalyses L-cysteate + H(+) = taurine + CO2. Its activity is regulated as follows. Activated weakly by 0.2-0.4 mM Li(+). Inhibited by bis-carboxymethyl-trithiocarbonate, ethylxanthogenacetic acid and 2,5-disulfoaniline. Catalyzes the decarboxylation of L-aspartate, 3-sulfino-L-alanine (cysteine sulfinic acid), and L-cysteate to beta-alanine, hypotaurine and taurine, respectively. The preferred substrate is L-aspartate. Does not exhibit any decarboxylation activity toward glutamate. In Mus musculus (Mouse), this protein is Acidic amino acid decarboxylase GADL1.